A 694-amino-acid chain; its full sequence is Elongation factor G (694 aa).

The region spanning 8-287 (EDYRNFGIMA…AVVEFLPAPT (280 aa)) is the tr-type G domain. Residues 17–24 (AHIDAGKT), 86–90 (DTPGH), and 140–143 (NKMD) each bind GTP.

This sequence belongs to the TRAFAC class translation factor GTPase superfamily. Classic translation factor GTPase family. EF-G/EF-2 subfamily.

Its subcellular location is the cytoplasm. Its function is as follows. Catalyzes the GTP-dependent ribosomal translocation step during translation elongation. During this step, the ribosome changes from the pre-translocational (PRE) to the post-translocational (POST) state as the newly formed A-site-bound peptidyl-tRNA and P-site-bound deacylated tRNA move to the P and E sites, respectively. Catalyzes the coordinated movement of the two tRNA molecules, the mRNA and conformational changes in the ribosome. This is Elongation factor G from Brucella canis (strain ATCC 23365 / NCTC 10854 / RM-666).